The sequence spans 327 residues: GMP reductase (327 aa).

Catalysis depends on C176, which acts as the Thioimidate intermediate. 205 to 228 (IIADGGIRTHGDIAKSIRFGASMV) lines the NADP(+) pocket.

Belongs to the IMPDH/GMPR family. GuaC type 2 subfamily.

It carries out the reaction IMP + NH4(+) + NADP(+) = GMP + NADPH + 2 H(+). In terms of biological role, catalyzes the irreversible NADPH-dependent deamination of GMP to IMP. It functions in the conversion of nucleobase, nucleoside and nucleotide derivatives of G to A nucleotides, and in maintaining the intracellular balance of A and G nucleotides. The chain is GMP reductase from Streptococcus gordonii (strain Challis / ATCC 35105 / BCRC 15272 / CH1 / DL1 / V288).